Reading from the N-terminus, the 320-residue chain is 1-aminocyclopropane-1-carboxylate oxidase 3 (320 aa).

One can recognise a Fe2OG dioxygenase domain in the interval proline 154–proline 254. Residues histidine 178, aspartate 180, and histidine 235 each contribute to the Fe cation site.

The protein belongs to the iron/ascorbate-dependent oxidoreductase family. Fe cation serves as cofactor. In terms of tissue distribution, flowers.

The catalysed reaction is 1-aminocyclopropane-1-carboxylate + L-ascorbate + O2 = ethene + L-dehydroascorbate + hydrogen cyanide + CO2 + 2 H2O. The protein operates within alkene biosynthesis; ethylene biosynthesis via S-adenosyl-L-methionine; ethylene from S-adenosyl-L-methionine: step 2/2. The sequence is that of 1-aminocyclopropane-1-carboxylate oxidase 3 (ACO3) from Cucumis melo (Muskmelon).